The following is a 76-amino-acid chain: Omega-conotoxin-like Ai6.3 (76 aa).

The N-terminal stretch at 1–22 (MKLTCLMIVAVLFLTAWTFVTA) is a signal peptide. Residues 23 to 50 (VPDSSNALENLYLKAHHEMNNPEDSELN) constitute a propeptide that is removed on maturation. Cystine bridges form between Cys-53/Cys-67, Cys-60/Cys-71, and Cys-66/Cys-75.

It belongs to the conotoxin O1 superfamily. In terms of tissue distribution, expressed by the venom duct.

Its subcellular location is the secreted. Its function is as follows. Omega-conotoxins act at presynaptic membranes, they bind and block voltage-gated calcium channels (Cav). The chain is Omega-conotoxin-like Ai6.3 from Conus ammiralis (Admiral cone).